Here is a 142-residue protein sequence, read N- to C-terminus: Hemoglobin subunit alpha (142 aa).

In terms of domain architecture, Globin spans 2-142; that stretch reads VLSAADKTNV…VSTVLTSKYR (141 aa). Phosphoserine is present on Ser4. N6-succinyllysine is present on Lys8. Position 9 is a phosphothreonine (Thr9). Lys12 is modified (N6-succinyllysine). An N6-acetyllysine; alternate modification is found at Lys17. Residue Lys17 is modified to N6-succinyllysine; alternate. Position 41 is an N6-succinyllysine (Lys41). Position 50 is a phosphoserine (Ser50). Position 59 (His59) interacts with O2. Heme b is bound at residue His88. Residue Ser103 is modified to Phosphoserine. Phosphothreonine is present on Thr109. Phosphoserine is present on Ser125. Phosphothreonine occurs at positions 135 and 138. Ser139 bears the Phosphoserine mark.

This sequence belongs to the globin family. As to quaternary structure, heterotetramer of two alpha chains and two beta chains. In terms of tissue distribution, red blood cells.

Involved in oxygen transport from the lung to the various peripheral tissues. In terms of biological role, hemopressin acts as an antagonist peptide of the cannabinoid receptor CNR1. Hemopressin-binding efficiently blocks cannabinoid receptor CNR1 and subsequent signaling. The polypeptide is Hemoglobin subunit alpha (HBA) (Equus zebra (Mountain zebra)).